A 338-amino-acid chain; its full sequence is Methionine import ATP-binding protein MetN 1 (338 aa).

The 240-residue stretch at 2-241 (IELHQVSKSF…AKHATTKRFV (240 aa)) folds into the ABC transporter domain. Residue 38-45 (GYSGAGKS) coordinates ATP.

The protein belongs to the ABC transporter superfamily. Methionine importer (TC 3.A.1.24) family. In terms of assembly, the complex is composed of two ATP-binding proteins (MetN), two transmembrane proteins (MetI) and a solute-binding protein (MetQ).

Its subcellular location is the cell membrane. It carries out the reaction L-methionine(out) + ATP + H2O = L-methionine(in) + ADP + phosphate + H(+). It catalyses the reaction D-methionine(out) + ATP + H2O = D-methionine(in) + ADP + phosphate + H(+). Part of the ABC transporter complex MetNIQ involved in methionine import. Responsible for energy coupling to the transport system. The protein is Methionine import ATP-binding protein MetN 1 of Listeria monocytogenes serotype 4b (strain F2365).